The sequence spans 117 residues: MEIKPSRIFSTITIFFLCLLLAHVTSKASSSSLCNGSVAECSSMVETEEMSVIMESWSSQRLTEEQAHKLSYGALRRNQPACDGGKRGESYSTQCLPPPSNPYSRGCSKHYRCGRDS.

A signal peptide spans 1–26 (MEIKPSRIFSTITIFFLCLLLAHVTS). Positions 27 to 64 (KASSSSLCNGSVAECSSMVETEEMSVIMESWSSQRLTE) are cleaved as a propeptide — removed in mature form. Asn35 carries N-linked (GlcNAc...) asparagine glycosylation. The segment at 77-107 (RNQPACDGGKRGESYSTQCLPPPSNPYSRGC) is disordered. Cystine bridges form between Cys82/Cys95 and Cys107/Cys113.

The protein belongs to the plant rapid alkalinization factor (RALF) family. Post-translationally, proteolytically cleaved, probably by S1P, a subtilisin-like serine protease (subtilase).

The protein resides in the secreted. In terms of biological role, cell signaling peptide that may regulate plant stress, growth, and development. Mediates a rapid alkalinization of extracellular space by mediating a transient increase in the cytoplasmic Ca(2+) concentration leading to a calcium-dependent signaling events through a cell surface receptor and a concomitant activation of some intracellular mitogen-activated protein kinases. The chain is Protein RALF-like 32 (RALFL32) from Arabidopsis thaliana (Mouse-ear cress).